Here is an 855-residue protein sequence, read N- to C-terminus: DNA mismatch repair protein MutS (855 aa).

ATP is bound at residue 613–620 (GPNMGGKS). Residues 796–817 (TTSLPHEQPRAKPGKPAIPQQS) are disordered.

The protein belongs to the DNA mismatch repair MutS family.

This protein is involved in the repair of mismatches in DNA. It is possible that it carries out the mismatch recognition step. This protein has a weak ATPase activity. This Pseudomonas syringae pv. tomato (strain ATCC BAA-871 / DC3000) protein is DNA mismatch repair protein MutS.